We begin with the raw amino-acid sequence, 254 residues long: Winged helix repair factor 1 (254 aa).

Positions 4–21 match the Bipartite nuclear localization signal motif; that stretch reads KRHHLIPETFGVKRRRKR. 3 winged helix domain regions span residues 32–104, 120–179, and 180–254; these read EPGS…GIIF, PYAG…LAVP, and GAGR…LPET.

The protein belongs to the STK19 family. In terms of assembly, monomer in solution. Homodimer; when bound to DNA. Component of a transcription-coupled nucleotide excision repair (TC-NER) complex composed of STK19, ERCC6, ERCC8, DDA1, DDB1, ELOF1 and UVSSA which assembles and interacts with the multiprotein RNA polymerase II complex when it stalls at DNA lesions. As to expression, monocytes, hepatocytes, epithelial cells, T- and B-lymphocytes.

It localises to the nucleus. The protein resides in the cytoplasm. DNA-binding protein which is required for efficient transcription-coupled nucleotide excision repair (TC-NER). Acts as part of a TC-NER complex which assembles and interacts with RNA polymerase II (RNAPII) when it stalls at DNA lesions. TC-NER complex subunit UVSSA binds to the GTF2H1/p62 subunit of the TFIIH transcription factor complex, tethering TFIIH to the TC-NER complex. WHR1/STK19 then interacts with the XPD helicase subunit of TFIIH which guides TFIIH to DNA downstream of the stalled RNAPII, ensuring DNA repair. Directly interacts with RNAPII and also binds to downstream DNA. Promotes the timely removal of DNA damage-stalled RNAPII, allowing downstream NER factors to access DNA lesions. Required for monoubiquitination of UVSSA. Regulates repositioning and stabilization of UVSSA within the TC-NER complex. Stimulates ubiquitination of RNAPII complex member RBP1. Also binds to RNA and regulates the expression levels of many mRNAs. This chain is Winged helix repair factor 1, found in Homo sapiens (Human).